Here is a 249-residue protein sequence, read N- to C-terminus: Small ribosomal subunit protein uS3 (249 aa).

The 72-residue stretch at 23 to 94 (LNEFFTRELS…TVELYAEKVQ (72 aa)) folds into the KH type-2 domain. Residues S32, S37, S106, and S141 each carry the phosphoserine modification.

It belongs to the universal ribosomal protein uS3 family. In terms of assembly, component of the small ribosomal subunit (SSU). Mature yeast ribosomes consist of a small (40S) and a large (60S) subunit. The 40S small subunit contains 1 molecule of ribosomal RNA (18S rRNA) and at least 33 different proteins. The large 60S subunit contains 3 rRNA molecules (25S, 5.8S and 5S rRNA) and at least 46 different proteins.

It is found in the cytoplasm. In terms of biological role, component of the ribosome, a large ribonucleoprotein complex responsible for the synthesis of proteins in the cell. The small ribosomal subunit (SSU) binds messenger RNAs (mRNAs) and translates the encoded message by selecting cognate aminoacyl-transfer RNA (tRNA) molecules. The large subunit (LSU) contains the ribosomal catalytic site termed the peptidyl transferase center (PTC), which catalyzes the formation of peptide bonds, thereby polymerizing the amino acids delivered by tRNAs into a polypeptide chain. The nascent polypeptides leave the ribosome through a tunnel in the LSU and interact with protein factors that function in enzymatic processing, targeting, and the membrane insertion of nascent chains at the exit of the ribosomal tunnel. The sequence is that of Small ribosomal subunit protein uS3 (rps3) from Schizosaccharomyces pombe (strain 972 / ATCC 24843) (Fission yeast).